The sequence spans 137 residues: Phosphoribosyl-ATP pyrophosphatase (137 aa).

Residues 114–124 (EGTSGIEEKAL) show a composition bias toward basic and acidic residues. Residues 114–137 (EGTSGIEEKALRKSLQRAAEEAQP) are disordered.

Belongs to the PRA-PH family.

It is found in the cytoplasm. The catalysed reaction is 1-(5-phospho-beta-D-ribosyl)-ATP + H2O = 1-(5-phospho-beta-D-ribosyl)-5'-AMP + diphosphate + H(+). It functions in the pathway amino-acid biosynthesis; L-histidine biosynthesis; L-histidine from 5-phospho-alpha-D-ribose 1-diphosphate: step 2/9. This chain is Phosphoribosyl-ATP pyrophosphatase, found in Paracidovorax citrulli (strain AAC00-1) (Acidovorax citrulli).